A 166-amino-acid polypeptide reads, in one-letter code: Endoribonuclease YbeY (166 aa).

3 residues coordinate Zn(2+): H132, H136, and H142.

Belongs to the endoribonuclease YbeY family. Zn(2+) serves as cofactor.

The protein localises to the cytoplasm. In terms of biological role, single strand-specific metallo-endoribonuclease involved in late-stage 70S ribosome quality control and in maturation of the 3' terminus of the 16S rRNA. This Clostridium acetobutylicum (strain ATCC 824 / DSM 792 / JCM 1419 / IAM 19013 / LMG 5710 / NBRC 13948 / NRRL B-527 / VKM B-1787 / 2291 / W) protein is Endoribonuclease YbeY.